The primary structure comprises 157 residues: Ribosome-binding factor A (157 aa).

The tract at residues 126-157 (RARATAQYAGDADPYKHDDEPSDDFEDDSDEE) is disordered. Residues 145–157 (EPSDDFEDDSDEE) are compositionally biased toward acidic residues.

The protein belongs to the RbfA family. In terms of assembly, monomer. Binds 30S ribosomal subunits, but not 50S ribosomal subunits or 70S ribosomes.

The protein localises to the cytoplasm. In terms of biological role, one of several proteins that assist in the late maturation steps of the functional core of the 30S ribosomal subunit. Associates with free 30S ribosomal subunits (but not with 30S subunits that are part of 70S ribosomes or polysomes). Required for efficient processing of 16S rRNA. May interact with the 5'-terminal helix region of 16S rRNA. This chain is Ribosome-binding factor A, found in Bifidobacterium longum (strain DJO10A).